The following is a 315-amino-acid chain: Calumenin-A (315 aa).

The N-terminal stretch at 1-19 (MEIRPLLMCFALCVVYATS) is a signal peptide. EF-hand domains are found at residues 68-103 (ESKR…AQKK), 104-139 (YIYE…TYLD), 151-186 (HMMA…EEYD), 188-223 (MKDI…HEDE), 229-264 (WVAT…SDYD), and 265-300 (HAEA…FVGS). Residues Asp81, Asp83, Asp85, Glu92, Asp117, Asn119, Asp121, Met123, and Glu128 each coordinate Ca(2+). Asn131 is a glycosylation site (N-linked (GlcNAc...) asparagine). Asp164, Asn166, Asp168, Glu175, Asp201, Asn203, Asp205, Glu212, Asp242, Asn244, Asp246, Lys248, Glu253, Asp278, Asn280, Asp282, Lys284, and Glu289 together coordinate Ca(2+). The short motif at 312 to 315 (HDEF) is the Prevents secretion from ER element.

Belongs to the CREC family. In terms of assembly, interacts with ggcx.

Its subcellular location is the endoplasmic reticulum membrane. It is found in the golgi apparatus. It localises to the secreted. The protein resides in the melanosome. The protein localises to the sarcoplasmic reticulum lumen. Involved in regulation of vitamin K-dependent carboxylation of multiple N-terminal glutamate residues. Seems to inhibit gamma-carboxylase ggcx. Binds 7 calcium ions with a low affinity. The chain is Calumenin-A (calua) from Salmo salar (Atlantic salmon).